A 269-amino-acid chain; its full sequence is 3-methyl-2-oxobutanoate hydroxymethyltransferase (269 aa).

Aspartate 42 and aspartate 81 together coordinate Mg(2+). 3-methyl-2-oxobutanoate contacts are provided by residues 42 to 43, aspartate 81, and lysine 111; that span reads DS. Residue glutamate 113 coordinates Mg(2+). The Proton acceptor role is filled by glutamate 179. Residues 250–269 form a disordered region; that stretch reads SGEFPRESHSHTEDELDDLY. A compositionally biased stretch (basic and acidic residues) spans 252–262; sequence EFPRESHSHTE.

It belongs to the PanB family. As to quaternary structure, homodecamer; pentamer of dimers. Mg(2+) is required as a cofactor.

It localises to the cytoplasm. It catalyses the reaction 3-methyl-2-oxobutanoate + (6R)-5,10-methylene-5,6,7,8-tetrahydrofolate + H2O = 2-dehydropantoate + (6S)-5,6,7,8-tetrahydrofolate. The protein operates within cofactor biosynthesis; coenzyme A biosynthesis. Its function is as follows. Catalyzes the reversible reaction in which hydroxymethyl group from 5,10-methylenetetrahydrofolate is transferred onto alpha-ketoisovalerate to form ketopantoate. This Haloarcula marismortui (strain ATCC 43049 / DSM 3752 / JCM 8966 / VKM B-1809) (Halobacterium marismortui) protein is 3-methyl-2-oxobutanoate hydroxymethyltransferase.